Consider the following 215-residue polypeptide: Probable maleylacetoacetate isomerase (215 aa).

A GST N-terminal domain is found at 2 to 85 (MSLILYGYWR…YLDETYPAPR (84 aa)). Positions 90–215 (RGAERYQVKA…AAPENQPDAC (126 aa)) constitute a GST C-terminal domain.

Belongs to the GST superfamily. Zeta family.

It catalyses the reaction 4-maleylacetoacetate = 4-fumarylacetoacetate. Its pathway is amino-acid degradation; L-phenylalanine degradation; acetoacetate and fumarate from L-phenylalanine: step 5/6. The chain is Probable maleylacetoacetate isomerase (maiA) from Vibrio cholerae serotype O1 (strain ATCC 39315 / El Tor Inaba N16961).